Here is a 527-residue protein sequence, read N- to C-terminus: Light-independent protochlorophyllide reductase subunit B (527 aa).

A [4Fe-4S] cluster-binding site is contributed by Asp36. Residue Asp290 is the Proton donor of the active site. A substrate-binding site is contributed by 425 to 426 (GL).

The protein belongs to the ChlB/BchB/BchZ family. Protochlorophyllide reductase is composed of three subunits; ChlL, ChlN and ChlB. Forms a heterotetramer of two ChlB and two ChlN subunits. [4Fe-4S] cluster is required as a cofactor.

It catalyses the reaction chlorophyllide a + oxidized 2[4Fe-4S]-[ferredoxin] + 2 ADP + 2 phosphate = protochlorophyllide a + reduced 2[4Fe-4S]-[ferredoxin] + 2 ATP + 2 H2O. It participates in porphyrin-containing compound metabolism; chlorophyll biosynthesis (light-independent). Component of the dark-operative protochlorophyllide reductase (DPOR) that uses Mg-ATP and reduced ferredoxin to reduce ring D of protochlorophyllide (Pchlide) to form chlorophyllide a (Chlide). This reaction is light-independent. The NB-protein (ChlN-ChlB) is the catalytic component of the complex. The sequence is that of Light-independent protochlorophyllide reductase subunit B from Synechococcus sp. (strain RCC307).